The primary structure comprises 266 residues: Succinate dehydrogenase [ubiquinone] iron-sulfur subunit, mitochondrial (266 aa).

The N-terminal 20 residues, 1–20 (MLNVLLRRKAFCLVTKKGMA), are a transit peptide targeting the mitochondrion. The 2Fe-2S ferredoxin-type domain maps to 36–127 (FKVYRWNPDE…QLKIYPLPHM (92 aa)). [2Fe-2S] cluster contacts are provided by C87, C92, C95, and C107. In terms of domain architecture, 4Fe-4S ferredoxin-type spans 169–199 (DRKKLDGLYECILCACCSTSCPSYWWNQEQY). Residues C179, C182, and C185 each contribute to the [4Fe-4S] cluster site. [3Fe-4S] cluster is bound at residue C189. W194 contributes to the a ubiquinone binding site. Residues C236 and C242 each coordinate [3Fe-4S] cluster. C246 lines the [4Fe-4S] cluster pocket.

The protein belongs to the succinate dehydrogenase/fumarate reductase iron-sulfur protein family. As to quaternary structure, component of complex II composed of four subunits: a flavoprotein (FP), an iron-sulfur protein (IP), and a cytochrome b composed of a large and a small subunit. [2Fe-2S] cluster is required as a cofactor. Requires [3Fe-4S] cluster as cofactor. It depends on [4Fe-4S] cluster as a cofactor.

It localises to the mitochondrion inner membrane. The catalysed reaction is a quinone + succinate = fumarate + a quinol. It participates in carbohydrate metabolism; tricarboxylic acid cycle; fumarate from succinate (eukaryal route): step 1/1. Functionally, subunit of succinate dehydrogenase (SDH) that is involved in complex II of the mitochondrial electron transport chain and is responsible for transferring electrons from succinate to ubiquinone (coenzyme Q). SDH1 and SDH2 form the catalytic dimer. Electrons flow from succinate to the FAD bound to SDH1, and sequentially through the iron-sulfur clusters bound to SDH2 and enter the membrane dimer formed by SDH3 and SDH4. The chain is Succinate dehydrogenase [ubiquinone] iron-sulfur subunit, mitochondrial (SDH2) from Saccharomyces cerevisiae (strain ATCC 204508 / S288c) (Baker's yeast).